The primary structure comprises 367 residues: MYVFKALAGIVLALVATLAHAERIRDLTSVQGVRENSLIGYGLVVGLDGTGDQTTQTPFTTQTLNNMLSQLGITVPTGTNMQLKNVAAVMVTASYPPFARQGQTIDVVVSSMGNAKSLRGGTLLMTPLKGVDSQVYALAQGNILVGGVGASAGGSSVQVNQLNGGRITNGAIIERELPTQFGAGNTINLQLNDEDFTMAQQITDAINRARGYGSATALDARTVQVRVPSGNSSQVRFLADIQNMEVNVTPQDAKVVINSRTGSVVMNREVTLDSCAVAQGNLSVTVNRQLNVNQPNTPFGGGQTVVTPQTQIDLRQSGGSLQSVRSSANLNSVVRALNALGATPMDLMSILQSMQSAGCLRAKLEII.

The first 21 residues, 1–21, serve as a signal peptide directing secretion; it reads MYVFKALAGIVLALVATLAHA.

Belongs to the FlgI family. As to quaternary structure, the basal body constitutes a major portion of the flagellar organelle and consists of four rings (L,P,S, and M) mounted on a central rod.

It localises to the periplasm. Its subcellular location is the bacterial flagellum basal body. In terms of biological role, assembles around the rod to form the L-ring and probably protects the motor/basal body from shearing forces during rotation. In Salmonella choleraesuis (strain SC-B67), this protein is Flagellar P-ring protein.